The following is a 245-amino-acid chain: Heavy metal-associated isoprenylated plant protein 1 (245 aa).

Residues 28–92 form the HMA 1 domain; that stretch reads PVHVVLKIDF…KLQKKSKKKV (65 aa). A metal cation-binding residues include Cys39 and Cys42. Residues 91 to 113 are disordered; the sequence is KVELISPKPKKDTKENNEKKAND. Basic and acidic residues predominate over residues 99–113; it reads PKKDTKENNEKKAND. The HMA 2 domain maps to 121–188; that stretch reads VTTVVLKVNC…KLKKTVQVVP (68 aa). A metal cation-binding residues include Cys132 and Cys135. Position 242 is a cysteine methyl ester (Cys242). Residue Cys242 is the site of S-farnesyl cysteine attachment. A propeptide spans 243-245 (removed in mature form); the sequence is SVM.

Belongs to the HIPP family.

Functionally, heavy-metal-binding protein. The chain is Heavy metal-associated isoprenylated plant protein 1 from Arabidopsis thaliana (Mouse-ear cress).